The sequence spans 140 residues: Large ribosomal subunit protein uL22 (140 aa).

The segment at 115-140 (AKPAAAKKDPKAAAAKADANAGTKEG) is disordered.

Belongs to the universal ribosomal protein uL22 family. Part of the 50S ribosomal subunit.

Functionally, this protein binds specifically to 23S rRNA; its binding is stimulated by other ribosomal proteins, e.g. L4, L17, and L20. It is important during the early stages of 50S assembly. It makes multiple contacts with different domains of the 23S rRNA in the assembled 50S subunit and ribosome. In terms of biological role, the globular domain of the protein is located near the polypeptide exit tunnel on the outside of the subunit, while an extended beta-hairpin is found that lines the wall of the exit tunnel in the center of the 70S ribosome. The sequence is that of Large ribosomal subunit protein uL22 from Heliobacterium modesticaldum (strain ATCC 51547 / Ice1).